Consider the following 362-residue polypeptide: Serine/threonine-protein kinase SRK2D (362 aa).

Residues 23-279 form the Protein kinase domain; sequence YDFVKDIGSG…IPEITSDKWF (257 aa). ATP is bound by residues 29–37 and K52; that span reads IGSGNFGVA. Residue D142 is the Proton acceptor of the active site.

The protein belongs to the protein kinase superfamily. Ser/Thr protein kinase family. Interacts with ABI1. Interacts with I-2, TOPP1 and TOPP2. Interacts with FREE1 (via C-terminus). Expressed in seeds, seedlings, roots (especially in tips), stems, leaves, shoots, flowers and siliques.

It catalyses the reaction L-seryl-[protein] + ATP = O-phospho-L-seryl-[protein] + ADP + H(+). The enzyme catalyses L-threonyl-[protein] + ATP = O-phospho-L-threonyl-[protein] + ADP + H(+). Its function is as follows. Together with SRK2I, key component and activator of the abscisic acid (ABA) signaling pathway that regulates numerous ABA responses, such as seed germination, Pro accumulation, root growth inhibition, dormancy and seedling growth, and, to a lesser extent, stomatal closure. In response to ABA, phosphorylates the ESCRT-I complex component FREE1, which is required for ABA-induced FREE1 nuclear import. This Arabidopsis thaliana (Mouse-ear cress) protein is Serine/threonine-protein kinase SRK2D (SRK2D).